The following is a 216-amino-acid chain: 3-isopropylmalate dehydratase small subunit (216 aa).

This sequence belongs to the LeuD family. LeuD type 1 subfamily. In terms of assembly, heterodimer of LeuC and LeuD.

The enzyme catalyses (2R,3S)-3-isopropylmalate = (2S)-2-isopropylmalate. The protein operates within amino-acid biosynthesis; L-leucine biosynthesis; L-leucine from 3-methyl-2-oxobutanoate: step 2/4. Its function is as follows. Catalyzes the isomerization between 2-isopropylmalate and 3-isopropylmalate, via the formation of 2-isopropylmaleate. The sequence is that of 3-isopropylmalate dehydratase small subunit from Psychrobacter sp. (strain PRwf-1).